Here is a 448-residue protein sequence, read N- to C-terminus: Trigger factor (448 aa).

Positions G167 to P253 constitute a PPIase FKBP-type domain.

This sequence belongs to the FKBP-type PPIase family. Tig subfamily.

It localises to the cytoplasm. It catalyses the reaction [protein]-peptidylproline (omega=180) = [protein]-peptidylproline (omega=0). Involved in protein export. Acts as a chaperone by maintaining the newly synthesized protein in an open conformation. Functions as a peptidyl-prolyl cis-trans isomerase. The polypeptide is Trigger factor (Borrelia hermsii (strain HS1 / DAH)).